Here is a 441-residue protein sequence, read N- to C-terminus: Aminopeptidase C (441 aa).

Catalysis depends on residues cysteine 70, histidine 361, and asparagine 382.

Belongs to the peptidase C1 family.

It catalyses the reaction Inactivates bleomycin B2 (a cytotoxic glycometallopeptide) by hydrolysis of a carboxyamide bond of beta-aminoalanine, but also shows general aminopeptidase activity. The specificity varies somewhat with source, but amino acid arylamides of Met, Leu and Ala are preferred.. This is Aminopeptidase C (pepC) from Listeria innocua serovar 6a (strain ATCC BAA-680 / CLIP 11262).